The following is a 295-amino-acid chain: Tyrosine recombinase XerD (295 aa).

The Core-binding (CB) domain maps to 1–85 (MNTIIEEYLN…TIRSFHQFAL (85 aa)). A Tyr recombinase domain is found at 106-289 (KLPDVLEIDE…SKSQIRKMYT (184 aa)). Catalysis depends on residues Arg-146, Lys-170, His-241, Arg-244, and His-267. Catalysis depends on Tyr-276, which acts as the O-(3'-phospho-DNA)-tyrosine intermediate.

It belongs to the 'phage' integrase family. XerD subfamily. Forms a cyclic heterotetrameric complex composed of two molecules of XerC and two molecules of XerD.

The protein resides in the cytoplasm. Functionally, site-specific tyrosine recombinase, which acts by catalyzing the cutting and rejoining of the recombining DNA molecules. The XerC-XerD complex is essential to convert dimers of the bacterial chromosome into monomers to permit their segregation at cell division. It also contributes to the segregational stability of plasmids. The polypeptide is Tyrosine recombinase XerD (Staphylococcus epidermidis (strain ATCC 35984 / DSM 28319 / BCRC 17069 / CCUG 31568 / BM 3577 / RP62A)).